Consider the following 309-residue polypeptide: Taste receptor type 2 member 20 (309 aa).

The Extracellular portion of the chain corresponds to Met1–His6. The helical transmembrane segment at Ile7–Ile27 threads the bilayer. Residues Ala28 to Gln46 lie on the Cytoplasmic side of the membrane. Residues Ile47–Tyr67 traverse the membrane as a helical segment. Over Ser68–Lys79 the chain is Extracellular. A helical transmembrane segment spans residues Val80–Thr100. The Cytoplasmic portion of the chain corresponds to Ser101 to Ala125. The helical transmembrane segment at Lys126–Met146 threads the bilayer. Residues Lys147–Thr178 lie on the Extracellular side of the membrane. Residues Val179–Ile199 traverse the membrane as a helical segment. At Tyr200 to Gln229 the chain is on the cytoplasmic side. Residues Thr230–Trp250 traverse the membrane as a helical segment. Topologically, residues Asn251 to Ile259 are extracellular. Residues Val260–Ile280 form a helical membrane-spanning segment. Topologically, residues Trp281–Pro309 are cytoplasmic.

The protein belongs to the G-protein coupled receptor T2R family.

It is found in the membrane. In terms of biological role, receptor that may play a role in the perception of bitterness and is gustducin-linked. May play a role in sensing the chemical composition of the gastrointestinal content. The activity of this receptor may stimulate alpha gustducin, mediate PLC-beta-2 activation and lead to the gating of TRPM5. The sequence is that of Taste receptor type 2 member 20 (TAS2R20) from Pan troglodytes (Chimpanzee).